Here is a 323-residue protein sequence, read N- to C-terminus: tRNA dimethylallyltransferase (323 aa).

12–19 (GPTAAGKT) serves as a coordination point for ATP. 14–19 (TAAGKT) is a substrate binding site. 2 interaction with substrate tRNA regions span residues 37 to 40 (DSAL) and 161 to 165 (QRLMR).

The protein belongs to the IPP transferase family. As to quaternary structure, monomer. Requires Mg(2+) as cofactor.

It catalyses the reaction adenosine(37) in tRNA + dimethylallyl diphosphate = N(6)-dimethylallyladenosine(37) in tRNA + diphosphate. Functionally, catalyzes the transfer of a dimethylallyl group onto the adenine at position 37 in tRNAs that read codons beginning with uridine, leading to the formation of N6-(dimethylallyl)adenosine (i(6)A). The protein is tRNA dimethylallyltransferase of Pseudomonas paraeruginosa (strain DSM 24068 / PA7) (Pseudomonas aeruginosa (strain PA7)).